The primary structure comprises 874 residues: Alanine--tRNA ligase (874 aa).

Positions 563, 567, 665, and 669 each coordinate Zn(2+).

It belongs to the class-II aminoacyl-tRNA synthetase family. Zn(2+) serves as cofactor.

The protein localises to the cytoplasm. It catalyses the reaction tRNA(Ala) + L-alanine + ATP = L-alanyl-tRNA(Ala) + AMP + diphosphate. In terms of biological role, catalyzes the attachment of alanine to tRNA(Ala) in a two-step reaction: alanine is first activated by ATP to form Ala-AMP and then transferred to the acceptor end of tRNA(Ala). Also edits incorrectly charged Ser-tRNA(Ala) and Gly-tRNA(Ala) via its editing domain. The sequence is that of Alanine--tRNA ligase from Haemophilus influenzae (strain PittGG).